The primary structure comprises 323 residues: uncharacterized protein (323 aa).

Positions 1 to 45 are cleaved as a signal peptide; sequence MLATLSQIRAWSTEHLIDAAGYWTETADRWEDVFLQMRNQAHAIA. The interval 186–227 is disordered; it reads FKQDGPTPPPPGAPHPSGGADGPYSDPITSMMLPPAGTEAPV. 2 helical membrane passes run 269–289 and 290–310; these read SAEWTAAVAGFAGSSAGVVGT and ALAIPAGPADWALLGAALLGV.

It is found in the cell membrane. This is an uncharacterized protein from Mycobacterium tuberculosis (strain CDC 1551 / Oshkosh).